The chain runs to 195 residues: Myelin-associated neurite-outgrowth inhibitor (195 aa).

Position 1 is an N-acetylmethionine (Met1). Topologically, residues 1-18 (MNPVYSPGSSGVPYANAK) are cytoplasmic. A Phosphoserine modification is found at Ser6. The helical transmembrane segment at 19–42 (GIGYPAGFPMGYAAAAPAYSPNMY) threads the bilayer. Residues 43 to 142 (PGANPTFQAG…PAPLPPPRGN (100 aa)) lie on the Extracellular side of the membrane. N-linked (GlcNAc...) asparagine glycosylation is present at Asn46. Residues 143–164 (GVTMGMVAGTTMAMSAGTLLTA) traverse the membrane as a helical segment. At 165 to 195 (HSPTPVAPHPVTVPTYRAPGTPTYSYVPPQW) the chain is on the cytoplasmic side.

This sequence belongs to the FAM168 family. In terms of assembly, may form homodimers. May interact with DAZAP2, FAM168A, PRDX6, RBM6, TMTC1 and YPEL2. Interacts with CDC27. N-glycosylated.

It localises to the cytoplasm. The protein resides in the perinuclear region. The protein localises to the cell membrane. It is found in the cell projection. Its subcellular location is the axon. Functionally, inhibitor of neuronal axonal outgrowth. Acts as a negative regulator of CDC42 and STAT3 and a positive regulator of STMN2. Positive regulator of CDC27. The protein is Myelin-associated neurite-outgrowth inhibitor (FAM168B) of Bos taurus (Bovine).